Reading from the N-terminus, the 1241-residue chain is ATP-dependent helicase/nuclease subunit A (1241 aa).

Positions Ser-12 to Arg-485 constitute a UvrD-like helicase ATP-binding domain. Ala-33–Thr-40 is a binding site for ATP. In terms of domain architecture, UvrD-like helicase C-terminal spans Gly-505–Gly-805.

This sequence belongs to the helicase family. AddA subfamily. Heterodimer of AddA and AddB/RexB. Mg(2+) is required as a cofactor.

The catalysed reaction is Couples ATP hydrolysis with the unwinding of duplex DNA by translocating in the 3'-5' direction.. It carries out the reaction ATP + H2O = ADP + phosphate + H(+). Its function is as follows. The heterodimer acts as both an ATP-dependent DNA helicase and an ATP-dependent, dual-direction single-stranded exonuclease. Recognizes the chi site generating a DNA molecule suitable for the initiation of homologous recombination. The AddA nuclease domain is required for chi fragment generation; this subunit has the helicase and 3' -&gt; 5' nuclease activities. The sequence is that of ATP-dependent helicase/nuclease subunit A from Bacillus cereus (strain B4264).